The chain runs to 335 residues: Glycerol-3-phosphate dehydrogenase [NAD(P)+] (335 aa).

Positions 12, 13, and 107 each coordinate NADPH. 3 residues coordinate sn-glycerol 3-phosphate: K107, G138, and S140. Position 142 (A142) interacts with NADPH. 5 residues coordinate sn-glycerol 3-phosphate: K193, D246, S256, R257, and N258. Catalysis depends on K193, which acts as the Proton acceptor. R257 lines the NADPH pocket. NADPH-binding residues include V281 and E283.

Belongs to the NAD-dependent glycerol-3-phosphate dehydrogenase family.

The protein localises to the cytoplasm. The catalysed reaction is sn-glycerol 3-phosphate + NAD(+) = dihydroxyacetone phosphate + NADH + H(+). The enzyme catalyses sn-glycerol 3-phosphate + NADP(+) = dihydroxyacetone phosphate + NADPH + H(+). It functions in the pathway membrane lipid metabolism; glycerophospholipid metabolism. Its function is as follows. Catalyzes the reduction of the glycolytic intermediate dihydroxyacetone phosphate (DHAP) to sn-glycerol 3-phosphate (G3P), the key precursor for phospholipid synthesis. In Citrifermentans bemidjiense (strain ATCC BAA-1014 / DSM 16622 / JCM 12645 / Bem) (Geobacter bemidjiensis), this protein is Glycerol-3-phosphate dehydrogenase [NAD(P)+].